Reading from the N-terminus, the 449-residue chain is MAKHYIPNSAHKEEMLKEIGLSSIDELFADIPGKFIRDELNLPEGKSEYEVFLEMNEILGKNKTVLEMPTFLGAGTYFHYIPAHVKYLIERSEFLTAYTPYQPEISQGMLQALFEYQSLIAELVGLPVVNASMYDWGTAMAEAALMTVRLHRGKRKKFIVPRHTHPERLQVLETYAKGPGVEIETVKWNERGQVDIEDLKEKVKDAAGVYVEIPNFFGLLEEEVREIGEIAHEAGAYFVVGVDPTILGIVEAPGELGADIVVGEASYFGNPMNFGGPRAGIFAVRNDMKLIRQMPGRLIGMTKDAEGKRAFVMTLQTREQHIRRAKATSNICSNEALVAVAAAIHIASLGPRGIRELGEVILKNTAYLKKRLSEVAEIPFDGVNFKDVLVRFEKPYKEIHEELLKRNIHGGYYVGKHFPELGESALFAATETTRKEWVDALISALREVI.

It belongs to the GcvP family. N-terminal subunit subfamily. In terms of assembly, the glycine cleavage system is composed of four proteins: P, T, L and H. In this organism, the P 'protein' is a heterodimer of two subunits.

The catalysed reaction is N(6)-[(R)-lipoyl]-L-lysyl-[glycine-cleavage complex H protein] + glycine + H(+) = N(6)-[(R)-S(8)-aminomethyldihydrolipoyl]-L-lysyl-[glycine-cleavage complex H protein] + CO2. Its function is as follows. The glycine cleavage system catalyzes the degradation of glycine. The P protein binds the alpha-amino group of glycine through its pyridoxal phosphate cofactor; CO(2) is released and the remaining methylamine moiety is then transferred to the lipoamide cofactor of the H protein. The sequence is that of Probable glycine dehydrogenase (decarboxylating) subunit 1 from Pyrococcus abyssi (strain GE5 / Orsay).